Consider the following 346-residue polypeptide: Aldose 1-epimerase (346 aa).

Substrate is bound at residue Arg-79. Catalysis depends on His-175, which acts as the Proton donor. Asp-245 is a binding site for substrate. The Proton acceptor role is filled by Glu-309.

The protein belongs to the aldose epimerase family.

It localises to the cytoplasm. It catalyses the reaction alpha-D-glucose = beta-D-glucose. It functions in the pathway carbohydrate metabolism; hexose metabolism. Mutarotase converts alpha-aldose to the beta-anomer. It is active on D-glucose, L-arabinose, D-xylose, D-galactose, maltose and lactose. The sequence is that of Aldose 1-epimerase (galM) from Escherichia coli (strain K12).